A 298-amino-acid polypeptide reads, in one-letter code: N-acetylmuramic acid 6-phosphate etherase (298 aa).

The 164-residue stretch at 55–218 (IHAQVSGGGR…STGLMIKSGK (164 aa)) folds into the SIS domain. Glu-83 acts as the Proton donor in catalysis. Glu-114 is an active-site residue.

Belongs to the GCKR-like family. MurNAc-6-P etherase subfamily. Homodimer.

It carries out the reaction N-acetyl-D-muramate 6-phosphate + H2O = N-acetyl-D-glucosamine 6-phosphate + (R)-lactate. It functions in the pathway amino-sugar metabolism; 1,6-anhydro-N-acetylmuramate degradation. It participates in amino-sugar metabolism; N-acetylmuramate degradation. The protein operates within cell wall biogenesis; peptidoglycan recycling. Its function is as follows. Specifically catalyzes the cleavage of the D-lactyl ether substituent of MurNAc 6-phosphate, producing GlcNAc 6-phosphate and D-lactate. Together with AnmK, is also required for the utilization of anhydro-N-acetylmuramic acid (anhMurNAc) either imported from the medium or derived from its own cell wall murein, and thus plays a role in cell wall recycling. This Escherichia coli (strain SMS-3-5 / SECEC) protein is N-acetylmuramic acid 6-phosphate etherase.